Consider the following 184-residue polypeptide: ATP synthase subunit b, chloroplastic (184 aa).

A helical transmembrane segment spans residues 27 to 49; the sequence is LATNPINLSVVLGVLIFFGKGVL.

This sequence belongs to the ATPase B chain family. In terms of assembly, F-type ATPases have 2 components, F(1) - the catalytic core - and F(0) - the membrane proton channel. F(1) has five subunits: alpha(3), beta(3), gamma(1), delta(1), epsilon(1). F(0) has four main subunits: a(1), b(1), b'(1) and c(10-14). The alpha and beta chains form an alternating ring which encloses part of the gamma chain. F(1) is attached to F(0) by a central stalk formed by the gamma and epsilon chains, while a peripheral stalk is formed by the delta, b and b' chains.

The protein resides in the plastid. The protein localises to the chloroplast thylakoid membrane. Its function is as follows. F(1)F(0) ATP synthase produces ATP from ADP in the presence of a proton or sodium gradient. F-type ATPases consist of two structural domains, F(1) containing the extramembraneous catalytic core and F(0) containing the membrane proton channel, linked together by a central stalk and a peripheral stalk. During catalysis, ATP synthesis in the catalytic domain of F(1) is coupled via a rotary mechanism of the central stalk subunits to proton translocation. Component of the F(0) channel, it forms part of the peripheral stalk, linking F(1) to F(0). The chain is ATP synthase subunit b, chloroplastic from Phalaenopsis aphrodite subsp. formosana (Moth orchid).